An 898-amino-acid chain; its full sequence is Aconitate hydratase 1 (898 aa).

Ala-2 carries the post-translational modification N-acetylalanine. Substrate-binding positions include Gln-90 and 209–211 (DSH). Cys-441, Cys-507, and Cys-510 together coordinate [4Fe-4S] cluster. Substrate contacts are provided by residues Arg-540, Arg-545, Arg-703, and 784 to 785 (SR).

Belongs to the aconitase/IPM isomerase family. As to quaternary structure, monomer. [4Fe-4S] cluster serves as cofactor. As to expression, mostly expressed in roots, stems and leaves, also present in stems and flowers.

The protein resides in the cytoplasm. It localises to the mitochondrion. The catalysed reaction is citrate = D-threo-isocitrate. Its pathway is carbohydrate metabolism; tricarboxylic acid cycle; isocitrate from oxaloacetate: step 2/2. In terms of biological role, catalyzes the isomerization of citrate to isocitrate via cis-aconitate. Contributes to oxidative stress tolerance. May have a role in respiration. The polypeptide is Aconitate hydratase 1 (Arabidopsis thaliana (Mouse-ear cress)).